A 245-amino-acid chain; its full sequence is 1-(5-phosphoribosyl)-5-[(5-phosphoribosylamino)methylideneamino] imidazole-4-carboxamide isomerase (245 aa).

Aspartate 8 serves as the catalytic Proton acceptor. Aspartate 129 acts as the Proton donor in catalysis.

The protein belongs to the HisA/HisF family.

It is found in the cytoplasm. It catalyses the reaction 1-(5-phospho-beta-D-ribosyl)-5-[(5-phospho-beta-D-ribosylamino)methylideneamino]imidazole-4-carboxamide = 5-[(5-phospho-1-deoxy-D-ribulos-1-ylimino)methylamino]-1-(5-phospho-beta-D-ribosyl)imidazole-4-carboxamide. It functions in the pathway amino-acid biosynthesis; L-histidine biosynthesis; L-histidine from 5-phospho-alpha-D-ribose 1-diphosphate: step 4/9. The sequence is that of 1-(5-phosphoribosyl)-5-[(5-phosphoribosylamino)methylideneamino] imidazole-4-carboxamide isomerase from Geotalea uraniireducens (strain Rf4) (Geobacter uraniireducens).